Consider the following 205-residue polypeptide: MSNILLITSSPRGDESVSNKFAGELAGKLKAKSASNTLVHRDLAADPIPHLDTVKTAAIRKPADQRTAEESVAADYSDKLVTELLAADTVVIGTGLINFNIYSGLKSWIDNVARAGQTFKYTETGPVGLATGKKVYIVLAAAGVYSEGPAVSMNHAVPYLKTVLGFMGMTDVEVIYVEGLAFGPEAVEKAVAAAEAKVEELAQAA.

Residues serine 10 and 16 to 18 (SVS) each bind FMN.

It belongs to the azoreductase type 1 family. Homodimer. FMN serves as cofactor.

It carries out the reaction 2 a quinone + NADH + H(+) = 2 a 1,4-benzosemiquinone + NAD(+). The catalysed reaction is N,N-dimethyl-1,4-phenylenediamine + anthranilate + 2 NAD(+) = 2-(4-dimethylaminophenyl)diazenylbenzoate + 2 NADH + 2 H(+). Its function is as follows. Quinone reductase that provides resistance to thiol-specific stress caused by electrophilic quinones. Also exhibits azoreductase activity. Catalyzes the reductive cleavage of the azo bond in aromatic azo compounds to the corresponding amines. This Agrobacterium fabrum (strain C58 / ATCC 33970) (Agrobacterium tumefaciens (strain C58)) protein is FMN-dependent NADH:quinone oxidoreductase.